The following is a 219-amino-acid chain: Occludin/ELL domain-containing protein 1 (219 aa).

The tract at residues 1 to 110 is disordered; that stretch reads MQIHAGPASR…DYELKYPPVT (110 aa). The span at 17-43 shows a compositional bias: low complexity; sequence LARLSGPEATCNSRPAARGRQRAAAPR. A compositionally biased stretch (basic and acidic residues) spans 72–93; that stretch reads VFADELRPREPLHPEKHPRDLG. Residues 100-210 enclose the OCEL domain; it reads PDYELKYPPV…QIRKFDDQQD (111 aa).

The protein belongs to the ELL/occludin family.

This Mus musculus (Mouse) protein is Occludin/ELL domain-containing protein 1 (Ocel1).